The sequence spans 203 residues: Urease accessory protein UreE (203 aa).

The segment at 170–203 (EHHGHSHSHSHSHSHDHDHQHGPSCSHGHHHGHR) is disordered.

It belongs to the UreE family.

It is found in the cytoplasm. In terms of biological role, involved in urease metallocenter assembly. Binds nickel. Probably functions as a nickel donor during metallocenter assembly. The polypeptide is Urease accessory protein UreE (Burkholderia mallei (strain SAVP1)).